The following is a 221-amino-acid chain: Thiamine-phosphate synthase (221 aa).

Residues 49–53 (QFREK) and N85 each bind 4-amino-2-methyl-5-(diphosphooxymethyl)pyrimidine. Mg(2+) is bound by residues D86 and D105. S124 is a 4-amino-2-methyl-5-(diphosphooxymethyl)pyrimidine binding site. Residue 151-153 (TQS) participates in 2-[(2R,5Z)-2-carboxy-4-methylthiazol-5(2H)-ylidene]ethyl phosphate binding. K154 serves as a coordination point for 4-amino-2-methyl-5-(diphosphooxymethyl)pyrimidine. 2-[(2R,5Z)-2-carboxy-4-methylthiazol-5(2H)-ylidene]ethyl phosphate-binding positions include G183 and 203 to 204 (IS).

Belongs to the thiamine-phosphate synthase family. Mg(2+) serves as cofactor.

It catalyses the reaction 2-[(2R,5Z)-2-carboxy-4-methylthiazol-5(2H)-ylidene]ethyl phosphate + 4-amino-2-methyl-5-(diphosphooxymethyl)pyrimidine + 2 H(+) = thiamine phosphate + CO2 + diphosphate. The catalysed reaction is 2-(2-carboxy-4-methylthiazol-5-yl)ethyl phosphate + 4-amino-2-methyl-5-(diphosphooxymethyl)pyrimidine + 2 H(+) = thiamine phosphate + CO2 + diphosphate. The enzyme catalyses 4-methyl-5-(2-phosphooxyethyl)-thiazole + 4-amino-2-methyl-5-(diphosphooxymethyl)pyrimidine + H(+) = thiamine phosphate + diphosphate. Its pathway is cofactor biosynthesis; thiamine diphosphate biosynthesis; thiamine phosphate from 4-amino-2-methyl-5-diphosphomethylpyrimidine and 4-methyl-5-(2-phosphoethyl)-thiazole: step 1/1. Functionally, condenses 4-methyl-5-(beta-hydroxyethyl)thiazole monophosphate (THZ-P) and 2-methyl-4-amino-5-hydroxymethyl pyrimidine pyrophosphate (HMP-PP) to form thiamine monophosphate (TMP). This chain is Thiamine-phosphate synthase, found in Histophilus somni (strain 129Pt) (Haemophilus somnus).